Reading from the N-terminus, the 181-residue chain is dTTP/UTP pyrophosphatase (181 aa).

Aspartate 67 serves as the catalytic Proton acceptor.

It belongs to the Maf family. YhdE subfamily. A divalent metal cation is required as a cofactor.

Its subcellular location is the cytoplasm. The catalysed reaction is dTTP + H2O = dTMP + diphosphate + H(+). It carries out the reaction UTP + H2O = UMP + diphosphate + H(+). In terms of biological role, nucleoside triphosphate pyrophosphatase that hydrolyzes dTTP and UTP. May have a dual role in cell division arrest and in preventing the incorporation of modified nucleotides into cellular nucleic acids. In Latilactobacillus sakei subsp. sakei (strain 23K) (Lactobacillus sakei subsp. sakei), this protein is dTTP/UTP pyrophosphatase.